The chain runs to 281 residues: F-actin-capping protein subunit alpha (281 aa).

Belongs to the F-actin-capping protein alpha subunit family. In terms of assembly, component of the F-actin capping complex, composed of a heterodimer of an alpha and a beta subunit.

The protein resides in the cytoplasm. It localises to the cytoskeleton. Functionally, F-actin-capping proteins bind in a Ca(2+)-independent manner to the fast growing ends of actin filaments (barbed end) thereby blocking the exchange of subunits at these ends. Unlike other capping proteins (such as gelsolin and severin), these proteins do not sever actin filaments. This is F-actin-capping protein subunit alpha (acpB) from Dictyostelium discoideum (Social amoeba).